We begin with the raw amino-acid sequence, 266 residues long: 4-hydroxy-tetrahydrodipicolinate reductase (266 aa).

Residues 7-12 (GTIGRM), Glu33, 96-98 (GTT), and 120-123 (APNM) each bind NAD(+). Residue His153 is the Proton donor/acceptor of the active site. His154 is a (S)-2,3,4,5-tetrahydrodipicolinate binding site. Lys157 serves as the catalytic Proton donor. Residue 163-164 (GT) participates in (S)-2,3,4,5-tetrahydrodipicolinate binding.

This sequence belongs to the DapB family.

Its subcellular location is the cytoplasm. The catalysed reaction is (S)-2,3,4,5-tetrahydrodipicolinate + NAD(+) + H2O = (2S,4S)-4-hydroxy-2,3,4,5-tetrahydrodipicolinate + NADH + H(+). It catalyses the reaction (S)-2,3,4,5-tetrahydrodipicolinate + NADP(+) + H2O = (2S,4S)-4-hydroxy-2,3,4,5-tetrahydrodipicolinate + NADPH + H(+). It functions in the pathway amino-acid biosynthesis; L-lysine biosynthesis via DAP pathway; (S)-tetrahydrodipicolinate from L-aspartate: step 4/4. Its function is as follows. Catalyzes the conversion of 4-hydroxy-tetrahydrodipicolinate (HTPA) to tetrahydrodipicolinate. The chain is 4-hydroxy-tetrahydrodipicolinate reductase from Polynucleobacter necessarius subsp. necessarius (strain STIR1).